The following is a 251-amino-acid chain: ATP synthase subunit a (251 aa).

Transmembrane regions (helical) follow at residues 29-49, 56-73, 87-107, 117-137, 159-181, 192-212, and 218-238; these read FTQS…ITLV, LVPG…EFIA, FVPL…FGMI, IIVT…YGFM, LIVA…RLFA, IFAG…LSPL, and VAIT…FATL.

It belongs to the ATPase A chain family. F-type ATPases have 2 components, CF(1) - the catalytic core - and CF(0) - the membrane proton channel. CF(1) has five subunits: alpha(3), beta(3), gamma(1), delta(1), epsilon(1). CF(0) has three main subunits: a(1), b(2) and c(9-12). The alpha and beta chains form an alternating ring which encloses part of the gamma chain. CF(1) is attached to CF(0) by a central stalk formed by the gamma and epsilon chains, while a peripheral stalk is formed by the delta and b chains.

The protein localises to the cell inner membrane. Its function is as follows. Key component of the proton channel; it plays a direct role in the translocation of protons across the membrane. This Methylobacterium sp. (strain 4-46) protein is ATP synthase subunit a.